The chain runs to 219 residues: MSTIDTKTSRGLLGKKLGMTQVWDENDTLIPVTVIEITPNVVTQVRTPEADGYNAVQIAYGQIDRRKVNKPSAGHFDKAGVTPRRHLTEVRTADAAEYSAGQELTVDGTFEAGQLVDVVGTSKSKGFAGVMKRHNFQGVSASHGAHRNHRKPGSIGASSTPSRVFKGMRMAGRMGGERVTVLNLKVQAIDAEKGLLLVKGAVPGARGRIVFVRNAVKGA.

Residues 140 to 163 (SASHGAHRNHRKPGSIGASSTPSR) form a disordered region.

It belongs to the universal ribosomal protein uL3 family. Part of the 50S ribosomal subunit. Forms a cluster with proteins L14 and L19.

In terms of biological role, one of the primary rRNA binding proteins, it binds directly near the 3'-end of the 23S rRNA, where it nucleates assembly of the 50S subunit. This is Large ribosomal subunit protein uL3 from Leifsonia xyli subsp. xyli (strain CTCB07).